The following is a 670-amino-acid chain: Catalase (670 aa).

Catalysis depends on residues His61 and Asn132. Position 345 (Tyr345) interacts with heme.

The protein belongs to the catalase family. In terms of assembly, homotetramer. Heme serves as cofactor.

The protein localises to the peroxisome matrix. It carries out the reaction 2 H2O2 = O2 + 2 H2O. Its function is as follows. Catalyzes the degradation of hydrogen peroxide (H(2)O(2)) generated by peroxisomal oxidases to water and oxygen, thereby protecting cells from the toxic effects of hydrogen peroxide. This is Catalase from Penicillium janthinellum (Penicillium vitale).